A 147-amino-acid chain; its full sequence is Protein-export protein SecB (147 aa).

Belongs to the SecB family. Homotetramer, a dimer of dimers. One homotetramer interacts with 1 SecA dimer.

The protein resides in the cytoplasm. Its function is as follows. One of the proteins required for the normal export of preproteins out of the cell cytoplasm. It is a molecular chaperone that binds to a subset of precursor proteins, maintaining them in a translocation-competent state. It also specifically binds to its receptor SecA. The sequence is that of Protein-export protein SecB from Neisseria meningitidis serogroup A / serotype 4A (strain DSM 15465 / Z2491).